We begin with the raw amino-acid sequence, 176 residues long: Disulfide bond formation protein B (176 aa).

The Cytoplasmic portion of the chain corresponds to 1–14 (MLQFLNRCSKGRGA). The chain crosses the membrane as a helical span at residues 15-31 (WLLMALTALVLELVALY). The Periplasmic portion of the chain corresponds to 32 to 49 (FQHVMLLQPCVMCIYERA). An intrachain disulfide couples C41 to C44. A helical transmembrane segment spans residues 50–65 (ALFGILGASLLGAIAP). The Cytoplasmic portion of the chain corresponds to 66 to 71 (KSPLRY). A helical transmembrane segment spans residues 72–89 (LAIFIWIYSAWKGVQLAW). Topologically, residues 90 to 144 (THTMLQLHPSPFTTCDFFVSFPSWLPLDKWFPAVFVASGDCAVKQWEFLSLEMPQ) are periplasmic. Cysteines 104 and 130 form a disulfide. A helical transmembrane segment spans residues 145–163 (WLVGIFAAYLFIAILVLIS). Residues 164-176 (QFVKPKRRDLFSR) lie on the Cytoplasmic side of the membrane.

This sequence belongs to the DsbB family.

It localises to the cell inner membrane. Required for disulfide bond formation in some periplasmic proteins. Acts by oxidizing the DsbA protein. The polypeptide is Disulfide bond formation protein B (Yersinia enterocolitica serotype O:8 / biotype 1B (strain NCTC 13174 / 8081)).